The sequence spans 367 residues: Cell division protein FtsZ (367 aa).

GTP is bound by residues 17–21 (GGGSN), 104–106 (GTG), E135, K139, and D183.

The protein belongs to the FtsZ family. Homodimer. Polymerizes to form a dynamic ring structure in a strictly GTP-dependent manner. Interacts directly with several other division proteins.

Its subcellular location is the cytoplasm. Its function is as follows. Essential cell division protein that forms a contractile ring structure (Z ring) at the future cell division site. The regulation of the ring assembly controls the timing and the location of cell division. One of the functions of the FtsZ ring is to recruit other cell division proteins to the septum to produce a new cell wall between the dividing cells. Binds GTP and shows GTPase activity. In Aquifex aeolicus (strain VF5), this protein is Cell division protein FtsZ.